Reading from the N-terminus, the 369-residue chain is Phospho-N-acetylmuramoyl-pentapeptide-transferase (369 aa).

The next 10 helical transmembrane spans lie at 3–23 (ALLG…PLFI), 53–73 (GGIV…LLTW), 81–101 (VTPS…VGFL), 118–138 (WQKI…AITL), 162–182 (FMAL…CLIV), 198–218 (LAAG…FWQF), 240–260 (PLDL…FLWW), 267–287 (IFMG…LAIL), 290–310 (TELL…SVVL), and 347–367 (FWII…LEWI).

Belongs to the glycosyltransferase 4 family. MraY subfamily. It depends on Mg(2+) as a cofactor.

It is found in the cell membrane. The enzyme catalyses UDP-N-acetyl-alpha-D-muramoyl-L-alanyl-gamma-D-glutamyl-meso-2,6-diaminopimeloyl-D-alanyl-D-alanine + di-trans,octa-cis-undecaprenyl phosphate = di-trans,octa-cis-undecaprenyl diphospho-N-acetyl-alpha-D-muramoyl-L-alanyl-D-glutamyl-meso-2,6-diaminopimeloyl-D-alanyl-D-alanine + UMP. It functions in the pathway cell wall biogenesis; peptidoglycan biosynthesis. Catalyzes the initial step of the lipid cycle reactions in the biosynthesis of the cell wall peptidoglycan: transfers peptidoglycan precursor phospho-MurNAc-pentapeptide from UDP-MurNAc-pentapeptide onto the lipid carrier undecaprenyl phosphate, yielding undecaprenyl-pyrophosphoryl-MurNAc-pentapeptide, known as lipid I. This chain is Phospho-N-acetylmuramoyl-pentapeptide-transferase, found in Clavibacter sepedonicus (Clavibacter michiganensis subsp. sepedonicus).